A 319-amino-acid polypeptide reads, in one-letter code: Sulfate adenylyltransferase subunit 2 (319 aa).

Belongs to the PAPS reductase family. CysD subfamily. Heterodimer composed of CysD, the smaller subunit, and CysN.

It catalyses the reaction sulfate + ATP + H(+) = adenosine 5'-phosphosulfate + diphosphate. The protein operates within sulfur metabolism; hydrogen sulfide biosynthesis; sulfite from sulfate: step 1/3. With CysN forms the ATP sulfurylase (ATPS) that catalyzes the adenylation of sulfate producing adenosine 5'-phosphosulfate (APS) and diphosphate, the first enzymatic step in sulfur assimilation pathway. APS synthesis involves the formation of a high-energy phosphoric-sulfuric acid anhydride bond driven by GTP hydrolysis by CysN coupled to ATP hydrolysis by CysD. The chain is Sulfate adenylyltransferase subunit 2 from Methylobacterium radiotolerans (strain ATCC 27329 / DSM 1819 / JCM 2831 / NBRC 15690 / NCIMB 10815 / 0-1).